The chain runs to 331 residues: Phosphoribosylformylglycinamidine cyclo-ligase (331 aa).

Belongs to the AIR synthase family.

It is found in the cytoplasm. It carries out the reaction 2-formamido-N(1)-(5-O-phospho-beta-D-ribosyl)acetamidine + ATP = 5-amino-1-(5-phospho-beta-D-ribosyl)imidazole + ADP + phosphate + H(+). It participates in purine metabolism; IMP biosynthesis via de novo pathway; 5-amino-1-(5-phospho-D-ribosyl)imidazole from N(2)-formyl-N(1)-(5-phospho-D-ribosyl)glycinamide: step 2/2. This is Phosphoribosylformylglycinamidine cyclo-ligase from Clostridium botulinum (strain Loch Maree / Type A3).